The chain runs to 81 residues: Photosystem I iron-sulfur center (81 aa).

4Fe-4S ferredoxin-type domains lie at S2–W31 and I39–Y68. C11, C14, C17, C21, C48, C51, C54, and C58 together coordinate [4Fe-4S] cluster.

As to quaternary structure, the eukaryotic PSI reaction center is composed of at least 11 subunits. [4Fe-4S] cluster is required as a cofactor.

Its subcellular location is the plastid. It is found in the chloroplast thylakoid membrane. The catalysed reaction is reduced [plastocyanin] + hnu + oxidized [2Fe-2S]-[ferredoxin] = oxidized [plastocyanin] + reduced [2Fe-2S]-[ferredoxin]. Apoprotein for the two 4Fe-4S centers FA and FB of photosystem I (PSI); essential for photochemical activity. FB is the terminal electron acceptor of PSI, donating electrons to ferredoxin. The C-terminus interacts with PsaA/B/D and helps assemble the protein into the PSI complex. Required for binding of PsaD and PsaE to PSI. PSI is a plastocyanin-ferredoxin oxidoreductase, converting photonic excitation into a charge separation, which transfers an electron from the donor P700 chlorophyll pair to the spectroscopically characterized acceptors A0, A1, FX, FA and FB in turn. The polypeptide is Photosystem I iron-sulfur center (Chloranthus spicatus (Chulantree)).